The chain runs to 1938 residues: Myosin-13 (1938 aa).

The Myosin N-terminal SH3-like domain maps to 33 to 82 (DSKKACFVADNKEMYVKGMIQTRENDKVIVKTLDDRMLTLNNDQVFPMNP). Positions 86 to 782 (DKIEDMAMMT…LLGLLEEMRD (697 aa)) constitute a Myosin motor domain. The residue at position 130 (lysine 130) is an N6,N6,N6-trimethyllysine. Residue 179-186 (GESGAGKT) coordinates ATP. Actin-binding stretches follow at residues 659 to 681 (LNKLMTNLRSTHPHFVRCLIPNE) and 761 to 775 (RFGNTKVFFKAGLLG). Residues 785-814 (LVTLMTSTQAVCRGYLMRVEFKKMMERRDS) form the IQ domain. Residues 843–1938 (LLKSAEAEKE…RDVGSQKMEE (1096 aa)) are a coiled coil. The segment at 1917–1938 (AESQVNKLRAKSRDVGSQKMEE) is disordered. Over residues 1927–1938 (KSRDVGSQKMEE) the composition is skewed to basic and acidic residues.

This sequence belongs to the TRAFAC class myosin-kinesin ATPase superfamily. Myosin family. As to quaternary structure, muscle myosin is a hexameric protein that consists of 2 heavy chain subunits (MHC), 2 alkali light chain subunits (MLC) and 2 regulatory light chain subunits (MLC-2). Specifically expressed in extraocular and laryngeal muscles.

The protein resides in the cytoplasm. Its subcellular location is the myofibril. In terms of biological role, fast twitching myosin mediating the high-velocity and low-tension contractions of specific striated muscles. This Homo sapiens (Human) protein is Myosin-13 (MYH13).